We begin with the raw amino-acid sequence, 379 residues long: Anhydro-N-acetylmuramic acid kinase (379 aa).

ATP is bound at residue 9–16; it reads GTSADGVD.

It belongs to the anhydro-N-acetylmuramic acid kinase family.

The catalysed reaction is 1,6-anhydro-N-acetyl-beta-muramate + ATP + H2O = N-acetyl-D-muramate 6-phosphate + ADP + H(+). It functions in the pathway amino-sugar metabolism; 1,6-anhydro-N-acetylmuramate degradation. It participates in cell wall biogenesis; peptidoglycan recycling. In terms of biological role, catalyzes the specific phosphorylation of 1,6-anhydro-N-acetylmuramic acid (anhMurNAc) with the simultaneous cleavage of the 1,6-anhydro ring, generating MurNAc-6-P. Is required for the utilization of anhMurNAc either imported from the medium or derived from its own cell wall murein, and thus plays a role in cell wall recycling. The chain is Anhydro-N-acetylmuramic acid kinase from Parasynechococcus marenigrum (strain WH8102).